A 200-amino-acid polypeptide reads, in one-letter code: Small ribosomal subunit protein uS4 (200 aa).

The segment at 22–42 (TGKELEKRPYAPGPHGPNQRK) is disordered. The S4 RNA-binding domain occupies 92-152 (ARLDNLVYRM…EKSRNLAVIK (61 aa)).

Belongs to the universal ribosomal protein uS4 family. In terms of assembly, part of the 30S ribosomal subunit. Contacts protein S5. The interaction surface between S4 and S5 is involved in control of translational fidelity.

In terms of biological role, one of the primary rRNA binding proteins, it binds directly to 16S rRNA where it nucleates assembly of the body of the 30S subunit. Its function is as follows. With S5 and S12 plays an important role in translational accuracy. The protein is Small ribosomal subunit protein uS4 of Bacillus cytotoxicus (strain DSM 22905 / CIP 110041 / 391-98 / NVH 391-98).